The chain runs to 265 residues: Arginine and glutamate-rich protein 1 (265 aa).

A compositionally biased stretch (basic residues) spans 1–54 (MGRSRSRSSSRSKHAKSGKHNKKRSRSREKERVRKRSKSRESKRNRRRESRSRS). The interval 1 to 66 (MGRSRSRSSS…NTASRRERER (66 aa)) is necessary and sufficient for RNA binding. Positions 1-106 (MGRSRSRSSS…EKKAEYERQR (106 aa)) are disordered. 2 stretches are compositionally biased toward basic and acidic residues: residues 60–76 (SRRERERAASPPDRIDI) and 85–106 (SSLDEKQKREDEEKKAEYERQR). Positions 67 to 265 (AASPPDRIDI…KLSFSLKSPD (199 aa)) are necessary and sufficient for transcriptional regulation. Residues 164-168 (LLEEL) carry the LXXLL motif 1; degenerate motif. The LXXLL motif 2; degenerate motif lies at 193 to 197 (LERIL). Basic and acidic residues predominate over residues 229–245 (RMKLEQERQRQQKEEQK). The disordered stretch occupies residues 229-265 (RMKLEQERQRQQKEEQKIILGKGKSRPKLSFSLKSPD).

It belongs to the ARGLU1 family.

The protein resides in the nucleus. Its subcellular location is the nucleus speckle. It localises to the chromosome. Dual function regulator of gene expression; regulator of transcription and modulator of alternative splicing. General coactivator of nuclear receptor-induced gene expression. This chain is Arginine and glutamate-rich protein 1 (arglu1), found in Xenopus tropicalis (Western clawed frog).